Consider the following 444-residue polypeptide: 3-isopropylmalate dehydratase large subunit (444 aa).

Positions 348, 408, and 411 each coordinate [4Fe-4S] cluster.

The protein belongs to the aconitase/IPM isomerase family. LeuC type 1 subfamily. Heterodimer of LeuC and LeuD. It depends on [4Fe-4S] cluster as a cofactor.

It carries out the reaction (2R,3S)-3-isopropylmalate = (2S)-2-isopropylmalate. The protein operates within amino-acid biosynthesis; L-leucine biosynthesis; L-leucine from 3-methyl-2-oxobutanoate: step 2/4. Catalyzes the isomerization between 2-isopropylmalate and 3-isopropylmalate, via the formation of 2-isopropylmaleate. The chain is 3-isopropylmalate dehydratase large subunit from Buchnera aphidicola subsp. Uroleucon ambrosiae.